The primary structure comprises 227 residues: Lysosomal-associated transmembrane protein 4B (227 aa).

Helical transmembrane passes span 26–46 (ILLG…LLSA), 72–92 (MCIA…ATYG), 100–120 (WIIP…LVAI), and 153–173 (CLVL…GYLI). The interval 205–222 (PPYDDATAVTGTAKEPPP) is required for NEDD4 interaction.

This sequence belongs to the LAPTM4/LAPTM5 transporter family. As to quaternary structure, homooligomer; upon reaching the lysosomes. Interacts with MCOLN1. Interacts with NEDD4; may play a role in the lysosomal sorting of LAPTM4B; enhances HGS association with NEDD4; mediates inhibition of EGFR degradation. Interacts with PIP5K1C; promotes SNX5 association with LAPTM4B; kinase activity of PIP5K1C is required; interaction is regulated by phosphatidylinositol 4,5-bisphosphate generated by PIP5K1C. Interacts with HGS; promotes HGS ubiquitination. Interacts with SNX5. Interacts with SLC3A2 and SLC7A5; recruits SLC3A2 and SLC7A5 to lysosomes to promote leucine uptake into these organelles and is required for mTORC1 activation. Interacts with LRRC32; decreases TGFB1 production in regulatory T cells. Interacts with BECN1; competes with EGFR for LAPTM4B binding; regulates EGFR activity. Interacts with EGFR; positively correlates with EGFR activation. Undergoes proteolytic cleavage following delivery to the lysosomes. Post-translationally, ubiquitinated by NEDD4.

Its subcellular location is the endomembrane system. The protein localises to the late endosome membrane. It is found in the cell membrane. It localises to the cell projection. The protein resides in the lysosome membrane. Its subcellular location is the endosome membrane. The protein localises to the endosome. It is found in the multivesicular body membrane. It localises to the multivesicular body lumen. In terms of biological role, required for optimal lysosomal function. Blocks EGF-stimulated EGFR intraluminal sorting and degradation. Conversely by binding with the phosphatidylinositol 4,5-bisphosphate, regulates its PIP5K1C interaction, inhibits HGS ubiquitination and relieves LAPTM4B inhibition of EGFR degradation. Recruits SLC3A2 and SLC7A5 (the Leu transporter) to the lysosome, promoting entry of leucine and other essential amino acid (EAA) into the lysosome, stimulating activation of proton-transporting vacuolar (V)-ATPase protein pump (V-ATPase) and hence mTORC1 activation. Plays a role as negative regulator of TGFB1 production in regulatory T cells. Binds ceramide and facilitates its exit from late endosome in order to control cell death pathways. In Rattus norvegicus (Rat), this protein is Lysosomal-associated transmembrane protein 4B.